A 443-amino-acid polypeptide reads, in one-letter code: Porin D (443 aa).

The N-terminal stretch at 1-23 (MKVMKWSAIALAVSAGSTQFAVA) is a signal peptide. Residues histidine 179, aspartate 231, and serine 319 contribute to the active site.

It belongs to the outer membrane porin (Opr) (TC 1.B.25) family.

Its subcellular location is the cell outer membrane. Porin with a specificity for basic amino acids. Involved in facilitated diffusion of carbapenem beta-lactam antibiotics, such as imipenem and meropenem. Also possesses serine protease activity. This Pseudomonas aeruginosa (strain ATCC 15692 / DSM 22644 / CIP 104116 / JCM 14847 / LMG 12228 / 1C / PRS 101 / PAO1) protein is Porin D (oprD).